Here is a 355-residue protein sequence, read N- to C-terminus: UDP-N-acetylglucosamine--N-acetylmuramyl-(pentapeptide) pyrophosphoryl-undecaprenol N-acetylglucosamine transferase (355 aa).

UDP-N-acetyl-alpha-D-glucosamine is bound by residues 13 to 15 (TGG), N125, R162, S190, I244, and Q289.

This sequence belongs to the glycosyltransferase 28 family. MurG subfamily.

The protein resides in the cell inner membrane. The enzyme catalyses di-trans,octa-cis-undecaprenyl diphospho-N-acetyl-alpha-D-muramoyl-L-alanyl-D-glutamyl-meso-2,6-diaminopimeloyl-D-alanyl-D-alanine + UDP-N-acetyl-alpha-D-glucosamine = di-trans,octa-cis-undecaprenyl diphospho-[N-acetyl-alpha-D-glucosaminyl-(1-&gt;4)]-N-acetyl-alpha-D-muramoyl-L-alanyl-D-glutamyl-meso-2,6-diaminopimeloyl-D-alanyl-D-alanine + UDP + H(+). It functions in the pathway cell wall biogenesis; peptidoglycan biosynthesis. Cell wall formation. Catalyzes the transfer of a GlcNAc subunit on undecaprenyl-pyrophosphoryl-MurNAc-pentapeptide (lipid intermediate I) to form undecaprenyl-pyrophosphoryl-MurNAc-(pentapeptide)GlcNAc (lipid intermediate II). This is UDP-N-acetylglucosamine--N-acetylmuramyl-(pentapeptide) pyrophosphoryl-undecaprenol N-acetylglucosamine transferase from Neisseria meningitidis serogroup A / serotype 4A (strain DSM 15465 / Z2491).